We begin with the raw amino-acid sequence, 749 residues long: Catalase-peroxidase (749 aa).

Positions Trp-98 to Tyr-234 form a cross-link, tryptophyl-tyrosyl-methioninium (Trp-Tyr) (with M-260). His-99 acts as the Proton acceptor in catalysis. The tryptophyl-tyrosyl-methioninium (Tyr-Met) (with W-98) cross-link spans Tyr-234–Met-260. A heme b-binding site is contributed by His-275.

Belongs to the peroxidase family. Peroxidase/catalase subfamily. In terms of assembly, homodimer or homotetramer. Requires heme b as cofactor. Post-translationally, formation of the three residue Trp-Tyr-Met cross-link is important for the catalase, but not the peroxidase activity of the enzyme.

Its subcellular location is the cytoplasm. It catalyses the reaction H2O2 + AH2 = A + 2 H2O. The enzyme catalyses 2 H2O2 = O2 + 2 H2O. In terms of biological role, bifunctional enzyme with both catalase and broad-spectrum peroxidase activity. The sequence is that of Catalase-peroxidase from Mycosarcoma maydis (Corn smut fungus).